A 657-amino-acid chain; its full sequence is Receptor-type tyrosine-protein phosphatase R (657 aa).

Residues 1 to 21 (MRRAVCFPALCLLLNLHAAGC) form the signal peptide. Topologically, residues 22 to 227 (FSGNNDHFLA…EADKIWSKEG (206 aa)) are extracellular. An O-linked (Xyl...) (chondroitin sulfate) serine glycan is attached at Ser23. N-linked (GlcNAc...) asparagine glycosylation occurs at Asn129. The helical transmembrane segment at 228 to 248 (FYAVVIFLSIFVIIVTCLMIL) threads the bilayer. Residues 249–657 (YRLKERFQLS…ESRLSAETVQ (409 aa)) are Cytoplasmic-facing. Ser272 bears the Phosphoserine mark. Ser339 carries the post-translational modification Phosphoserine; by PKA. In terms of domain architecture, Tyrosine-protein phosphatase spans 393–647 (LQSEFMEIPM…EFVHHALCLY (255 aa)). Residues Asp554, 588–594 (CSAGIGR), and Gln632 contribute to the substrate site. The active-site Phosphocysteine intermediate is the Cys588.

The protein belongs to the protein-tyrosine phosphatase family. Receptor class 7 subfamily. As to quaternary structure, interacts with MAPKs. Detected in cerebrospinal fluid (at protein level). Expressed in brain, placenta, small intestine, stomach, uterus and weakly in the prostate. Isoform alpha has been observed only in the brain. Isoform gamma is expressed in brain, placenta and uterus. Isoform delta is expressed in brain, kidney, placenta, prostate, small intestine and uterus.

It is found in the secreted. It localises to the cell membrane. The protein resides in the cytoplasm. The protein localises to the perinuclear region. The enzyme catalyses O-phospho-L-tyrosyl-[protein] + H2O = L-tyrosyl-[protein] + phosphate. Functionally, sequesters mitogen-activated protein kinases (MAPKs) such as MAPK1, MAPK3 and MAPK14 in the cytoplasm in an inactive form. The MAPKs bind to a dephosphorylated kinase interacting motif, phosphorylation of which by the protein kinase A complex releases the MAPKs for activation and translocation into the nucleus. The polypeptide is Receptor-type tyrosine-protein phosphatase R (PTPRR) (Homo sapiens (Human)).